The following is a 159-amino-acid chain: Ribosomal RNA large subunit methyltransferase H (159 aa).

S-adenosyl-L-methionine is bound by residues leucine 76, glycine 108, and 127–132 (FSKMTF).

This sequence belongs to the RNA methyltransferase RlmH family. Homodimer.

The protein localises to the cytoplasm. It carries out the reaction pseudouridine(1915) in 23S rRNA + S-adenosyl-L-methionine = N(3)-methylpseudouridine(1915) in 23S rRNA + S-adenosyl-L-homocysteine + H(+). Functionally, specifically methylates the pseudouridine at position 1915 (m3Psi1915) in 23S rRNA. The polypeptide is Ribosomal RNA large subunit methyltransferase H (Oceanobacillus iheyensis (strain DSM 14371 / CIP 107618 / JCM 11309 / KCTC 3954 / HTE831)).